The following is a 196-amino-acid chain: Zinc finger C2H2 protein ECU03_0940 (196 aa).

C2H2-type zinc fingers lie at residues 130 to 155 (YACE…KEGH) and 166 to 191 (YVCP…KHYH).

The protein is Zinc finger C2H2 protein ECU03_0940 of Encephalitozoon cuniculi (strain GB-M1) (Microsporidian parasite).